The following is a 451-amino-acid chain: uncharacterized protein (451 aa).

The next 5 helical transmembrane spans lie at 11–31, 56–76, 151–171, 175–195, and 207–227; these read VLLK…YIDL, IQIY…SIGT, IIGI…NIYL, FWLI…LIIF, and VYSV…TIKI. The interval 250 to 300 is disordered; it reads TKSNNNNNNNNNNKQDDNIIYDTDSSFNGQSSSSSSSSSSSSSSSSSATTT. Low complexity-rich tracts occupy residues 253-262 and 280-300; these read NNNNNNNNNN and SSSS…ATTT. Helical transmembrane passes span 392–412 and 413–433; these read FVGV…SDYS and LLTI…LTYL.

Its subcellular location is the membrane. This is an uncharacterized protein from Dictyostelium discoideum (Social amoeba).